Here is a 162-residue protein sequence, read N- to C-terminus: NADH-quinone oxidoreductase subunit I (162 aa).

4Fe-4S ferredoxin-type domains follow at residues 54–83 (RRYE…IESE) and 93–122 (TRYD…ETQI). The [4Fe-4S] cluster site is built by C63, C66, C69, C73, C102, C105, C108, and C112.

It belongs to the complex I 23 kDa subunit family. In terms of assembly, NDH-1 is composed of 14 different subunits. Subunits NuoA, H, J, K, L, M, N constitute the membrane sector of the complex. Requires [4Fe-4S] cluster as cofactor.

The protein resides in the cell inner membrane. It catalyses the reaction a quinone + NADH + 5 H(+)(in) = a quinol + NAD(+) + 4 H(+)(out). Its function is as follows. NDH-1 shuttles electrons from NADH, via FMN and iron-sulfur (Fe-S) centers, to quinones in the respiratory chain. The immediate electron acceptor for the enzyme in this species is believed to be ubiquinone. Couples the redox reaction to proton translocation (for every two electrons transferred, four hydrogen ions are translocated across the cytoplasmic membrane), and thus conserves the redox energy in a proton gradient. The chain is NADH-quinone oxidoreductase subunit I from Burkholderia cenocepacia (strain ATCC BAA-245 / DSM 16553 / LMG 16656 / NCTC 13227 / J2315 / CF5610) (Burkholderia cepacia (strain J2315)).